The chain runs to 289 residues: MGNVNAREEANSNNASAVEDEDAEICSREAMSAASDGNHVAPPELMGQSPPHSPRATQSPLMFAPQVPVLPLQRPDEIHIPNPSWMQSPSSLYEEASNEQGIPTMITWCHGGKEIAVEGSWDNWKTRSRLQRSGKDFTIMKVLPSGVYEYRFIVDGQWRHAPELPLARDDAGNTFNILDLQDYVPEDIQSISGFEPPQSPENSYSNLLLGAEDYSKEPPVVPPHLQMTLLNLPAANPDIPSPLPRPQHVILNHLYMQKGKSGPSVVALGSTHRFLAKYVTVVLYKSLQR.

Residues 1 to 10 show a composition bias toward basic and acidic residues; it reads MGNVNAREEA. The tract at residues 1-59 is disordered; the sequence is MGNVNAREEANSNNASAVEDEDAEICSREAMSAASDGNHVAPPELMGQSPPHSPRATQS. The N-myristoyl glycine moiety is linked to residue Gly-2. Residues 103-180 form a kinase-interacting sequence (KIS) region; that stretch reads PTMITWCHGG…AGNTFNILDL (78 aa). The segment at 217–289 is association with SNF1 complex (ASC); the sequence is EPPVVPPHLQ…TVVLYKSLQR (73 aa).

The protein belongs to the 5'-AMP-activated protein kinase beta subunit family. In terms of assembly, subunit of a probable heterotrimeric complex consisting of an alpha catalytic (KIN10 or KIN11) subunit, and a beta (KINB) and a gamma (KING or SNF4) non-catalytic regulatory subunits. Interacts with SNF4. Interacts with FLZ1, FLZ2, FLZ8, FLZ9, FLZ10, FLZ12, FLZ13 and FLZ14. Post-translationally, sumoylated. As to expression, expressed in leaves, stems, roots, flower buds and flowers. Not detectable in siliques.

Its subcellular location is the cell membrane. In terms of biological role, regulatory subunit of the probable trimeric SNF1-related protein kinase (SnRK) complex, which may play a role in a signal transduction cascade regulating gene expression and carbohydrate metabolism in higher plants. The SnRK complex may also be involved in the regulation of fatty acid synthesis by phosphorylation of acetyl-CoA carboxylase and in assimilation of nitrogen by phosphorylating nitrate reductase. The protein is SNF1-related protein kinase regulatory subunit beta-2 (KINB2) of Arabidopsis thaliana (Mouse-ear cress).